A 166-amino-acid chain; its full sequence is MFPMVTEFMNYGQQTVRAARYIGQGFMITLSHANRLPVTIQYPYEKLITSERFRGRIHFEFDKCIACEVCVRVCPIDLPVVDWKLETDIRKKRLLNYSIDFGICIFCGNCVEYCPTNCLSMTEEYELSTYDRHELNYNQIALGRLPMSIIDDYTIRTIFNLPEIKS.

2 4Fe-4S ferredoxin-type domains span residues 55–84 and 95–124; these read GRIH…VDWK and LNYS…MTEE. [4Fe-4S] cluster-binding residues include Cys64, Cys67, Cys70, Cys74, Cys104, Cys107, Cys110, and Cys114.

The protein belongs to the complex I 23 kDa subunit family. NDH is composed of at least 16 different subunits, 5 of which are encoded in the nucleus. [4Fe-4S] cluster is required as a cofactor.

It is found in the plastid. The protein resides in the chloroplast thylakoid membrane. It carries out the reaction a plastoquinone + NADH + (n+1) H(+)(in) = a plastoquinol + NAD(+) + n H(+)(out). The enzyme catalyses a plastoquinone + NADPH + (n+1) H(+)(in) = a plastoquinol + NADP(+) + n H(+)(out). In terms of biological role, NDH shuttles electrons from NAD(P)H:plastoquinone, via FMN and iron-sulfur (Fe-S) centers, to quinones in the photosynthetic chain and possibly in a chloroplast respiratory chain. The immediate electron acceptor for the enzyme in this species is believed to be plastoquinone. Couples the redox reaction to proton translocation, and thus conserves the redox energy in a proton gradient. The polypeptide is NAD(P)H-quinone oxidoreductase subunit I, chloroplastic (Polymnia canadensis (White-flowered leaf-cup)).